The chain runs to 860 residues: Ras GTPase-activating-like protein gapA (860 aa).

A compositionally biased stretch (acidic residues) spans 1 to 20 (MEGLEIEDEDVILLDEDDDS). Residues 1 to 48 (MEGLEIEDEDVILLDEDDDSSSSSTVNNSSSNIKNNGNTNNNIGNDDS) are disordered. Positions 21 to 46 (SSSSTVNNSSSNIKNNGNTNNNIGND) are enriched in low complexity. Residues 146–185 (AEIQELKRNMVAEIRRNHLLERDVNKLDKRIALLIKHRSN) are a coiled coil. Residues 269–515 (FLILSLFRLA…SIVRQYLEDL (247 aa)) enclose the Ras-GAP domain. Residues 663 to 732 (NNPQLSSNAE…TIALRDLRKH (70 aa)) are a coiled coil.

In terms of assembly, heterotetramer. Quaternary complex with activated rac1A, ctxA and ctxB in the absence of rgaA.

In terms of biological role, part of signaling pathway that is required for completion of cytokinesis. gapA and rgaA control cortexillin localization to the cleavage furrow and hence may be involved in cleavage of the midbody in the final stage of cytokinesis by regulating the actin cytoskeleton. Forms a complex by linking activated rac1A to ctxA in the absence of rgaA. Assembly of this complex is necessary for the recruitment of cortexillin to the midzone of the dividing cell. This Dictyostelium discoideum (Social amoeba) protein is Ras GTPase-activating-like protein gapA (gapA).